The sequence spans 231 residues: 5'-methylthioadenosine/S-adenosylhomocysteine nucleosidase (231 aa).

Catalysis depends on Glu12, which acts as the Proton acceptor. Residues Gly78, Met153, and 174 to 175 (ME) contribute to the substrate site. The active-site Proton donor is the Asp198.

This sequence belongs to the PNP/UDP phosphorylase family. MtnN subfamily.

The enzyme catalyses S-adenosyl-L-homocysteine + H2O = S-(5-deoxy-D-ribos-5-yl)-L-homocysteine + adenine. It catalyses the reaction S-methyl-5'-thioadenosine + H2O = 5-(methylsulfanyl)-D-ribose + adenine. It carries out the reaction 5'-deoxyadenosine + H2O = 5-deoxy-D-ribose + adenine. Its pathway is amino-acid biosynthesis; L-methionine biosynthesis via salvage pathway; S-methyl-5-thio-alpha-D-ribose 1-phosphate from S-methyl-5'-thioadenosine (hydrolase route): step 1/2. Functionally, catalyzes the irreversible cleavage of the glycosidic bond in both 5'-methylthioadenosine (MTA) and S-adenosylhomocysteine (SAH/AdoHcy) to adenine and the corresponding thioribose, 5'-methylthioribose and S-ribosylhomocysteine, respectively. Also cleaves 5'-deoxyadenosine, a toxic by-product of radical S-adenosylmethionine (SAM) enzymes, into 5-deoxyribose and adenine. The sequence is that of 5'-methylthioadenosine/S-adenosylhomocysteine nucleosidase from Bacillus velezensis (strain DSM 23117 / BGSC 10A6 / LMG 26770 / FZB42) (Bacillus amyloliquefaciens subsp. plantarum).